A 298-amino-acid chain; its full sequence is Probable pyridoxal 5'-phosphate synthase subunit SNZ2 (298 aa).

Position 21 (aspartate 21) interacts with D-ribose 5-phosphate. Catalysis depends on lysine 78, which acts as the Schiff-base intermediate with D-ribose 5-phosphate. D-ribose 5-phosphate-binding positions include glycine 150, glycine 213, and 234–235; that span reads GS.

This sequence belongs to the PdxS/SNZ family. Homohexamer. Interacts with THI11.

The catalysed reaction is aldehydo-D-ribose 5-phosphate + D-glyceraldehyde 3-phosphate + L-glutamine = pyridoxal 5'-phosphate + L-glutamate + phosphate + 3 H2O + H(+). The protein operates within cofactor biosynthesis; pyridoxal 5'-phosphate biosynthesis. Functionally, catalyzes the formation of pyridoxal 5'-phosphate from ribose 5-phosphate (RBP), glyceraldehyde 3-phosphate (G3P) and ammonia. The ammonia is provided by a SNO isoform. Can also use ribulose 5-phosphate and dihydroxyacetone phosphate as substrates, resulting from enzyme-catalyzed isomerization of RBP and G3P, respectively. In Saccharomyces cerevisiae (strain ATCC 204508 / S288c) (Baker's yeast), this protein is Probable pyridoxal 5'-phosphate synthase subunit SNZ2 (SNZ2).